Here is a 309-residue protein sequence, read N- to C-terminus: Dicarboxylate carrier UCP2 (309 aa).

Over Met-1–Lys-16 the chain is Mitochondrial intermembrane. 3 Solcar repeats span residues Pro-11 to Phe-106, Ala-114 to Ala-203, and Asp-212 to Ala-297. The tract at residues Lys-16–Met-63 is important for interaction with long-chain fatty acids. The helical transmembrane segment at Phe-17–Arg-40 threads the bilayer. Residues Leu-41–Ser-77 lie on the Mitochondrial matrix side of the membrane. Residues Leu-78 to Val-103 traverse the membrane as a helical segment. Topologically, residues Lys-104–Arg-119 are mitochondrial intermembrane. Residues Leu-120–Gln-145 form a helical membrane-spanning segment. The Mitochondrial matrix segment spans residues Ala-146 to Arg-173. A helical membrane pass occupies residues Gly-174–Leu-199. Residues Ile-200 to His-217 are Mitochondrial intermembrane-facing. A helical membrane pass occupies residues Phe-218–Tyr-242. At Met-243 to Ala-268 the chain is on the mitochondrial matrix side. A helical transmembrane segment spans residues Phe-269–Leu-294. The important for interaction with long-chain fatty acids stretch occupies residues Leu-278–Val-285. The Mitochondrial intermembrane segment spans residues Lys-295–Phe-309.

It belongs to the mitochondrial carrier (TC 2.A.29) family. Homotetramer. Adopts an asymmetrical dimer of dimers functional form. Interacts with MICU1 (when methylated); leading to decrease the calcium sensitivity of MICU1.

It localises to the mitochondrion inner membrane. It carries out the reaction L-aspartate(out) + phosphate(in) + H(+)(in) = L-aspartate(in) + phosphate(out) + H(+)(out). The enzyme catalyses oxaloacetate(out) + phosphate(in) + H(+)(in) = oxaloacetate(in) + phosphate(out) + H(+)(out). It catalyses the reaction (S)-malate(out) + phosphate(in) + H(+)(in) = (S)-malate(in) + phosphate(out) + H(+)(out). The catalysed reaction is malonate(out) + phosphate(in) + H(+)(in) = malonate(in) + phosphate(out) + H(+)(out). It carries out the reaction sulfate(out) + phosphate(in) + H(+)(in) = sulfate(in) + phosphate(out) + H(+)(out). The enzyme catalyses (S)-malate(out) = (S)-malate(in). It catalyses the reaction L-aspartate(out) = L-aspartate(in). The catalysed reaction is phosphate(in) = phosphate(out). It carries out the reaction chloride(in) = chloride(out). The enzyme catalyses H(+)(in) = H(+)(out). It catalyses the reaction a long-chain fatty acid(out) = a long-chain fatty acid(in). Functionally, antiporter that exports dicarboxylate intermediates of the Krebs cycle in exchange for phosphate plus a proton across the inner membrane of mitochondria, a process driven by mitochondrial motive force with an overall impact on glycolysis, glutaminolysis and glutathione-dependent redox balance. Continuous export of oxaloacetate and related four-carbon dicarboxylates from mitochondrial matrix into the cytosol negatively regulates the oxidation of acetyl-CoA substrates via the Krebs cycle lowering the ATP/ADP ratio and reactive oxygen species (ROS) production. May mediate inducible proton entry into the mitochondrial matrix affecting ATP turnover as a protection mechanism against oxidative stress. The proton currents are most likely associated with fatty acid flipping across the inner membrane of mitochondria in a metabolic process regulated by free fatty acids and purine nucleotides. Regulates the use of glucose as a source of energy. Required for glucose-induced DRP1-dependent mitochondrial fission and neuron activation in the ventromedial nucleus of the hypothalamus (VMH). This mitochondrial adaptation mechanism modulates the VMH pool of glucose-excited neurons with an impact on systemic glucose homeostasis. Regulates ROS levels and metabolic reprogramming of macrophages during the resolution phase of inflammation. Attenuates ROS production in response to IL33 to preserve the integrity of the Krebs cycle required for persistent production of itaconate and subsequent GATA3-dependent differentiation of inflammation-resolving alternatively activated macrophages. Can unidirectionally transport anions including L-malate, L-aspartate, phosphate and chloride ions. Does not mediate adaptive thermogenesis. This is Dicarboxylate carrier UCP2 (UCP2) from Pongo abelii (Sumatran orangutan).